Consider the following 1353-residue polypeptide: MGTDSENPVLRNVLISFNLLLLGAVLKPFECRLEVTTEPAERPAVDEEGGLANCSPPVKEQPMVFHHIYNINVPVDSCCSSMLRSSAEEVSSEDDRLAEYTEQTSDSESQVTFTHRINLPKQACKCSTSLPSLQELLSRIEMLEREVSMLRDQCNSNCCQENAATGRLDYTLPCSGHGNFSLESCRCICSEGWAGSNCSEPRCPRGCSSRGVCLEGQCVCDNDYGGEDCSQLRCPAGCGSRGLCVDGECICEEGFGGEDCSQPRCPRDCSGRGHCDNGTCVCAEGYAGEDCGWLRCPNACSGRGVCQDGLCICEDGYGGQDCSAVAPPENLRVTGISDGSIELAWDSLGAATEYVVSYQPAGPGGSQLQQRVPGDWSTITITELEPGVAYNVSIYAVISDVLSSPVTTKVTTNLATPQGLKFKTITETTVEVQWEPFSFPFDGWEISFIPKNNEGGVIAQLPSTVTTFNQTGLKPGEEYTVTVVALKDQARSPPASDSISTLIDGPTQILVRDVSDTVAFVEWTPPRARVDAILLKYGLADGEGGRTTFRLQPPLSQYSLQALRPGARYHLAVSALRGANESQPALAQFTTEIDAPKNLRVGSRTPASLELTWDNSEAEAHSYRVVYSTLAGEHYHEVLVPRDTGPTTRATLADLVPGTEYGIGISAVMDSQQSVPATMNARTELDSPRDLLVTASTETSISLSWTKAMGPIDHYRVTFTPASGMASEVTVSRNESQLTLSELEPGTEYTISIIAERGRQQSLEATVDAFTGVRPITQLHFSQLTSSSVNITWSDPSPPADRLVLTYSPRDEEAPQQLALDGTRRHASLTGLRPSTEYLVSLVAVHGAVSSEPVTGSITTGMDAPKDLRVGNITQDSMVIYWSPPVAPFDHYRISYRAAEGRTDSTAIGNDATEYIMRLLQPATKYEIGVKSVRGREESEVASITTYTAMDAPLGVTATNITPTEALLQWNPPLMDVESYVLVLTRHTGETILVDGINQEYQLTNLQPSTTYTVAMYATNGPLTSQTISTNFTTLLDPPTNLTASEVTRRSALLSWVPPVGDIENYILTYRSTDGSRKELIVDAEDTWIRLEGLSETTQYTVRLQAAQNAMRSGFISTTFTTGGRVFANPQDCAQHLMNGDTLSGVYTISINGDLSQRVQVFCDMSTDGGGWIVFQRRQNGLTDFFRKWADYRVGFGNLEDEFWLGLDNIHKITSQGRYELRIDMRDGQEAAYAYYDKFSVGDSRSLYKLRIGDYNGTSGDSLTYHQGRPFSTKDRDNDVAVTNCAMSYKGAWWYKNCHRTNLNGKYGESRHSQGINWYHWKGHEFSIPFVEMKMRPYNHRNISGRKRRSLQL.

The signal sequence occupies residues 1 to 33; the sequence is MGTDSENPVLRNVLISFNLLLLGAVLKPFECRL. Positions 132–156 form a coiled coil; it reads SLQELLSRIEMLEREVSMLRDQCNS. Asn-179 and Asn-197 each carry an N-linked (GlcNAc...) asparagine glycan. EGF-like domains follow at residues 187-198, 234-260, 265-291, and 292-323; these read CICSEGWAGSNC, CPAGCGSRGLCVDGECICEEGFGGEDC, CPRDCSGRGHCDNGTCVCAEGYAGEDC, and GWLRCPNACSGRGVCQDGLCICEDGYGGQDCS. N-linked (GlcNAc...) asparagine glycosylation is present at Asn-277. 2 disulfide bridges follow: Cys-296–Cys-306 and Cys-313–Cys-322. Fibronectin type-III domains lie at 327–419, 420–504, 505–594, 595–686, 687–776, 777–863, 864–952, 953–1037, and 1038–1126; these read PPEN…TPQG, LKFK…TLID, GPTQ…TEID, APKN…TELD, SPRD…VRPI, TQLH…TGMD, APKD…AMDA, PLGV…TLLD, and PPTN…GGRV. N-linked (GlcNAc...) asparagine glycans are attached at residues Asn-391, Asn-469, and Asn-580. 7 N-linked (GlcNAc...) asparagine glycosylation sites follow: Asn-734, Asn-790, Asn-872, Asn-1031, Asn-1041, Asn-1256, and Asn-1342. The 216-residue stretch at 1124 to 1339 folds into the Fibrinogen C-terminal domain; that stretch reads GRVFANPQDC…FVEMKMRPYN (216 aa).

It belongs to the tenascin family. As to quaternary structure, forms homodimers and homotrimers. Interacts with CNTN1, NFASC and CSPG5. Brain specific.

Its subcellular location is the secreted. It is found in the extracellular space. The protein resides in the extracellular matrix. Its function is as follows. Neural extracellular matrix (ECM) protein involved in interactions with different cells and matrix components. Involved in cell attachment and neurite formation. Interaction with CNTN1 enhances the neurite outgrowth. This Gallus gallus (Chicken) protein is Tenascin-R (TNR).